A 204-amino-acid polypeptide reads, in one-letter code: Holliday junction branch migration complex subunit RuvA (204 aa).

Residues 1-67 (MIDYLYGTLD…GGVISLYGFF (67 aa)) form a domain I region. Residues 68–149 (TIEEREMYLL…TVNVLNKEKQ (82 aa)) are domain II. The flexible linker stretch occupies residues 150-154 (TGAET). The interval 155 to 204 (IKNTMVSEAIAGLITLGYKMQQARVAVTNVYEHNENITLEDLIKKSLQYL) is domain III.

This sequence belongs to the RuvA family. As to quaternary structure, homotetramer. Forms an RuvA(8)-RuvB(12)-Holliday junction (HJ) complex. HJ DNA is sandwiched between 2 RuvA tetramers; dsDNA enters through RuvA and exits via RuvB. An RuvB hexamer assembles on each DNA strand where it exits the tetramer. Each RuvB hexamer is contacted by two RuvA subunits (via domain III) on 2 adjacent RuvB subunits; this complex drives branch migration. In the full resolvosome a probable DNA-RuvA(4)-RuvB(12)-RuvC(2) complex forms which resolves the HJ.

Its subcellular location is the cytoplasm. Its function is as follows. The RuvA-RuvB-RuvC complex processes Holliday junction (HJ) DNA during genetic recombination and DNA repair, while the RuvA-RuvB complex plays an important role in the rescue of blocked DNA replication forks via replication fork reversal (RFR). RuvA specifically binds to HJ cruciform DNA, conferring on it an open structure. The RuvB hexamer acts as an ATP-dependent pump, pulling dsDNA into and through the RuvAB complex. HJ branch migration allows RuvC to scan DNA until it finds its consensus sequence, where it cleaves and resolves the cruciform DNA. In Endomicrobium trichonymphae, this protein is Holliday junction branch migration complex subunit RuvA.